The sequence spans 37 residues: Photosystem I reaction center subunit IX (37 aa).

The helical transmembrane segment at 4–24 (FLTTAPVVAAIWFTLTAGILI) threads the bilayer.

This sequence belongs to the PsaJ family.

It localises to the cellular thylakoid membrane. May help in the organization of the PsaE and PsaF subunits. The chain is Photosystem I reaction center subunit IX from Synechococcus sp. (strain WH7803).